We begin with the raw amino-acid sequence, 82 residues long: ATP synthase subunit 9, mitochondrial (82 aa).

2 helical membrane passes run 8 to 28 (IGAGAATIASAGAAIGIGNVF) and 45 to 67 (SFGYAILGFALTEAIASFAPMMA).

Belongs to the ATPase C chain family. In terms of assembly, F-type ATPases have 2 components, CF(1) - the catalytic core - and CF(0) - the membrane proton channel. CF(1) has five subunits: alpha(3), beta(3), gamma(1), delta(1), epsilon(1). CF(0) has three main subunits: a, b and c.

Its subcellular location is the mitochondrion membrane. Its function is as follows. This protein is one of the chains of the nonenzymatic membrane component (F0) of mitochondrial ATPase. This chain is ATP synthase subunit 9, mitochondrial (ATP9), found in Malus domestica (Apple).